A 384-amino-acid chain; its full sequence is Carbamoyl phosphate synthase small chain (384 aa).

The interval 1 to 193 (MTKPATTPAI…DSHPEIPASE (193 aa)) is CPSase. L-glutamine is bound by residues serine 51, glycine 245, and glycine 247. Residues 197-384 (HVVAYDYGVK…ISAMAPVVDR (188 aa)) enclose the Glutamine amidotransferase type-1 domain. The active-site Nucleophile is cysteine 273. L-glutamine-binding residues include leucine 274, glutamine 277, asparagine 315, glycine 317, and phenylalanine 318. Active-site residues include histidine 357 and glutamate 359.

This sequence belongs to the CarA family. Composed of two chains; the small (or glutamine) chain promotes the hydrolysis of glutamine to ammonia, which is used by the large (or ammonia) chain to synthesize carbamoyl phosphate. Tetramer of heterodimers (alpha,beta)4.

The enzyme catalyses hydrogencarbonate + L-glutamine + 2 ATP + H2O = carbamoyl phosphate + L-glutamate + 2 ADP + phosphate + 2 H(+). It carries out the reaction L-glutamine + H2O = L-glutamate + NH4(+). It participates in amino-acid biosynthesis; L-arginine biosynthesis; carbamoyl phosphate from bicarbonate: step 1/1. The protein operates within pyrimidine metabolism; UMP biosynthesis via de novo pathway; (S)-dihydroorotate from bicarbonate: step 1/3. Its function is as follows. Small subunit of the glutamine-dependent carbamoyl phosphate synthetase (CPSase). CPSase catalyzes the formation of carbamoyl phosphate from the ammonia moiety of glutamine, carbonate, and phosphate donated by ATP, constituting the first step of 2 biosynthetic pathways, one leading to arginine and/or urea and the other to pyrimidine nucleotides. The small subunit (glutamine amidotransferase) binds and cleaves glutamine to supply the large subunit with the substrate ammonia. In Stutzerimonas stutzeri (Pseudomonas stutzeri), this protein is Carbamoyl phosphate synthase small chain.